A 353-amino-acid chain; its full sequence is Probable WRKY transcription factor 7 (353 aa).

A disordered region spans residues 117–259 (VEEKKPETSS…SSRCHCSKKR (143 aa)). Low complexity predominate over residues 158–176 (SHNNNNNQNQTKNGSSSSS). Polar residues-rich tracts occupy residues 184 to 204 (APST…SFMS) and 213 to 229 (THMS…QLSG). Positions 275 to 341 (KMADIPSDEF…YEGDHNHALV (67 aa)) form a DNA-binding region, WRKY.

Belongs to the WRKY group II-d family. As to expression, in young, mature and senescent leaves.

The protein localises to the nucleus. Functionally, transcription factor. Interacts specifically with the W box (5'-(T)TGAC[CT]-3'), a frequently occurring elicitor-responsive cis-acting element. In Arabidopsis thaliana (Mouse-ear cress), this protein is Probable WRKY transcription factor 7 (WRKY7).